We begin with the raw amino-acid sequence, 695 residues long: L-type lectin-domain containing receptor kinase S.7 (695 aa).

Positions 1–23 (MPPRCRRLPLLFILLLAVRPLSA) are cleaved as a signal peptide. The Extracellular portion of the chain corresponds to 24–331 (AAASSIAAAP…NHRRRHLFYK (308 aa)). The legume-lectin like stretch occupies residues 37-276 (YRRISWASNL…VERWTFRTFG (240 aa)). N-linked (GlcNAc...) asparagine glycosylation is found at Asn45 and Asn279. The span at 286 to 320 (PTKYIGPMPPNNQPLPPPPSPSPSPPPPSPPPPPH) shows a compositional bias: pro residues. The disordered stretch occupies residues 286-323 (PTKYIGPMPPNNQPLPPPPSPSPSPPPPSPPPPPHPNH). Residues 332–352 (VLGGVLGGMVLLGLVVVGSAV) traverse the membrane as a helical segment. Topologically, residues 353-695 (LLGRSVRRKN…TANTAFFSCR (343 aa)) are cytoplasmic. The residue at position 376 (Thr376) is a Phosphothreonine. Ser378 is modified (phosphoserine). Phosphothreonine occurs at positions 386 and 403. The Protein kinase domain maps to 389–661 (FDSGNVIGVG…SMLDGTAPLI (273 aa)). ATP contacts are provided by residues 395–403 (IGVGGSGAT) and Lys418. The Proton acceptor role is filled by Asp514. A Phosphothreonine modification is found at Thr657.

This sequence in the N-terminal section; belongs to the leguminous lectin family. The protein in the C-terminal section; belongs to the protein kinase superfamily. Ser/Thr protein kinase family. As to quaternary structure, interacts with INP1. Interaction with INP1 is required for DAF1 polar localization at the future aperture sites in tetrads. Post-translationally, autophosphorylated at Thr-376; Ser-378; Thr-386; Thr-403 and Thr-657. As to expression, expressed in roots, leaves, lemma, palea, pistil and anthers.

Its subcellular location is the cell membrane. The protein localises to the cytoplasm. The protein resides in the cytosol. It carries out the reaction L-seryl-[protein] + ATP = O-phospho-L-seryl-[protein] + ADP + H(+). The enzyme catalyses L-threonyl-[protein] + ATP = O-phospho-L-threonyl-[protein] + ADP + H(+). Its function is as follows. Legume-lectin receptor-like kinase required for normal pollen development and male fertility. Regulates pollen exine assembly and aperture development. Plays a critical role in annulus formation, and may participate in the formation of the fibrillar-granular layer underneath the operculum. May function by regulating the expression of genes involved in pollen exine development. Kinase activity is required for its function in pollen development. The sequence is that of L-type lectin-domain containing receptor kinase S.7 from Oryza sativa subsp. japonica (Rice).